Consider the following 60-residue polypeptide: Large ribosomal subunit protein bL32 (60 aa).

The segment at 1 to 60 (MAVQQNKKTPSKRGMHRSHDFLVAPQLSVEQTTGETHMRHHISPNGFYRGRKVLKTKNDE) is disordered. Residues 49-60 (RGRKVLKTKNDE) are compositionally biased toward basic residues.

The protein belongs to the bacterial ribosomal protein bL32 family.

The sequence is that of Large ribosomal subunit protein bL32 from Herminiimonas arsenicoxydans.